The sequence spans 260 residues: Collagenase (260 aa).

Residues 1 to 16 (MKFLLVFALALATTSA) form the signal peptide. Positions 17 to 30 (FQHPASIFELREGR) are excised as a propeptide. The 227-residue stretch at 31–257 (IINGYEAYTG…YMDWIQQNTG (227 aa)) folds into the Peptidase S1 domain. An intrachain disulfide couples Cys60 to Cys76. Catalysis depends on charge relay system residues His75 and Asp118. 2 disulfides stabilise this stretch: Cys181-Cys196 and Cys206-Cys234. The active-site Charge relay system is the Ser210.

This sequence belongs to the peptidase S1 family.

Its subcellular location is the secreted. It catalyses the reaction Hydrolysis of proteins including native collagen at Xaa-|-Ala bond leaving an N-terminal (75%) and a C-terminal (25%) fragment.. Its activity is regulated as follows. Inhibited by diisopropylfluorophosphate. In terms of biological role, this enzyme is a serine protease capable of degrading the native triple helix of collagen. Also cleaves the B chain of insulin at the 15-Leu-|-Try-16 and 22-Arg-|-Gly-23 bonds. Hydrolyzes casein, but not Px-Pro-Leu-Gly-Pro-DArg, BzArgNHPh, AcTyrNHPh, 2-naphthyl phosphate, 2-naphthyl butyrate, 2-naphthyl caprylate, 2-naphthyl myristate, L-leucine 2-2-naphthylamide, L-valine 2-naphthylamide, L-cysteine 2-naphthylamide or L-glutarylphenylalanine 2-naphthylamide. The polypeptide is Collagenase (Hypoderma lineatum (Early cattle grub)).